A 910-amino-acid polypeptide reads, in one-letter code: Protein translocase subunit SecA (910 aa).

Residues Gln-89, 107–111 (GEGKT), and Asp-502 contribute to the ATP site. Zn(2+) contacts are provided by Cys-894, Cys-896, Cys-905, and His-906.

This sequence belongs to the SecA family. As to quaternary structure, monomer and homodimer. Part of the essential Sec protein translocation apparatus which comprises SecA, SecYEG and auxiliary proteins SecDF-YajC and YidC. The cofactor is Zn(2+).

The protein resides in the cell inner membrane. It is found in the cytoplasm. It catalyses the reaction ATP + H2O + cellular proteinSide 1 = ADP + phosphate + cellular proteinSide 2.. Part of the Sec protein translocase complex. Interacts with the SecYEG preprotein conducting channel. Has a central role in coupling the hydrolysis of ATP to the transfer of proteins into and across the cell membrane, serving both as a receptor for the preprotein-SecB complex and as an ATP-driven molecular motor driving the stepwise translocation of polypeptide chains across the membrane. This is Protein translocase subunit SecA from Mesorhizobium japonicum (strain LMG 29417 / CECT 9101 / MAFF 303099) (Mesorhizobium loti (strain MAFF 303099)).